The chain runs to 484 residues: Protein nucleotidyltransferase YdiU (484 aa).

Residues glycine 81, glycine 83, arginine 84, lysine 103, aspartate 115, glycine 116, arginine 166, and arginine 173 each coordinate ATP. The active-site Proton acceptor is aspartate 244. Positions 245 and 254 each coordinate Mg(2+). Aspartate 254 is a binding site for ATP.

This sequence belongs to the SELO family. Mg(2+) serves as cofactor. It depends on Mn(2+) as a cofactor.

It carries out the reaction L-seryl-[protein] + ATP = 3-O-(5'-adenylyl)-L-seryl-[protein] + diphosphate. The catalysed reaction is L-threonyl-[protein] + ATP = 3-O-(5'-adenylyl)-L-threonyl-[protein] + diphosphate. The enzyme catalyses L-tyrosyl-[protein] + ATP = O-(5'-adenylyl)-L-tyrosyl-[protein] + diphosphate. It catalyses the reaction L-histidyl-[protein] + UTP = N(tele)-(5'-uridylyl)-L-histidyl-[protein] + diphosphate. It carries out the reaction L-seryl-[protein] + UTP = O-(5'-uridylyl)-L-seryl-[protein] + diphosphate. The catalysed reaction is L-tyrosyl-[protein] + UTP = O-(5'-uridylyl)-L-tyrosyl-[protein] + diphosphate. Its function is as follows. Nucleotidyltransferase involved in the post-translational modification of proteins. It can catalyze the addition of adenosine monophosphate (AMP) or uridine monophosphate (UMP) to a protein, resulting in modifications known as AMPylation and UMPylation. This is Protein nucleotidyltransferase YdiU from Shewanella putrefaciens (strain CN-32 / ATCC BAA-453).